A 424-amino-acid polypeptide reads, in one-letter code: Glutamate-1-semialdehyde 2,1-aminomutase (424 aa).

Lys266 is modified (N6-(pyridoxal phosphate)lysine).

Belongs to the class-III pyridoxal-phosphate-dependent aminotransferase family. HemL subfamily. In terms of assembly, homodimer. Pyridoxal 5'-phosphate is required as a cofactor.

It is found in the cytoplasm. The enzyme catalyses (S)-4-amino-5-oxopentanoate = 5-aminolevulinate. It functions in the pathway porphyrin-containing compound metabolism; protoporphyrin-IX biosynthesis; 5-aminolevulinate from L-glutamyl-tRNA(Glu): step 2/2. The chain is Glutamate-1-semialdehyde 2,1-aminomutase from Thermus thermophilus (strain ATCC 27634 / DSM 579 / HB8).